The sequence spans 114 residues: Photosystem II reaction center Psb28 protein (114 aa).

Belongs to the Psb28 family. As to quaternary structure, part of the photosystem II complex.

Its subcellular location is the cellular thylakoid membrane. The polypeptide is Photosystem II reaction center Psb28 protein (Rippkaea orientalis (strain PCC 8801 / RF-1) (Cyanothece sp. (strain PCC 8801))).